Consider the following 157-residue polypeptide: Ribosome maturation factor RimP (157 aa).

The protein belongs to the RimP family.

The protein localises to the cytoplasm. In terms of biological role, required for maturation of 30S ribosomal subunits. The protein is Ribosome maturation factor RimP of Lactococcus lactis subsp. cremoris (strain MG1363).